Reading from the N-terminus, the 550-residue chain is Gamma-aminobutyric acid receptor subunit beta (550 aa).

Residues 1–24 form the signal peptide; that stretch reads MRRSKTRRIFHVSITLLLVSTIFC. Topologically, residues 25–264 are extracellular; sequence QNGTKPHNNS…FQLRRSVGYF (240 aa). N-linked (GlcNAc...) asparagine glycans are attached at residues asparagine 26, asparagine 32, asparagine 33, asparagine 45, asparagine 53, and asparagine 193. Cysteines 180 and 194 form a disulfide. Helical transmembrane passes span 265 to 285, 292 to 311, and 324 to 344; these read IFQT…SFWI, ARVA…STGV, and IDIY…EYAA. Over 345 to 527 the chain is Cytoplasmic; that stretch reads VNYSYWGRER…DVNLIDKYSR (183 aa). The segment at 405–465 is disordered; the sequence is AMSTSNTAAQ…TTSLKGARPH (61 aa). Residues 406 to 421 show a composition bias toward polar residues; that stretch reads MSTSNTAAQNNNFEST. Residues 528–548 traverse the membrane as a helical segment; sequence VVFPVCFIVFNLFYWSYYMMV.

Belongs to the ligand-gated ion channel (TC 1.A.9) family. Gamma-aminobutyric acid receptor (TC 1.A.9.5) subfamily.

The protein resides in the postsynaptic cell membrane. It is found in the cell membrane. In terms of biological role, GABA, an inhibitory neurotransmitter, mediates neuronal inhibition by binding to the GABA receptor and opening an integral chloride channel. The protein is Gamma-aminobutyric acid receptor subunit beta (gab-1) of Caenorhabditis elegans.